A 182-amino-acid chain; its full sequence is Large ribosomal subunit protein uL6 (182 aa).

The protein belongs to the universal ribosomal protein uL6 family. Part of the 50S ribosomal subunit.

In terms of biological role, this protein binds to the 23S rRNA, and is important in its secondary structure. It is located near the subunit interface in the base of the L7/L12 stalk, and near the tRNA binding site of the peptidyltransferase center. In Dehalococcoides mccartyi (strain CBDB1), this protein is Large ribosomal subunit protein uL6.